We begin with the raw amino-acid sequence, 466 residues long: Methylenetetrahydrofolate--tRNA-(uracil-5-)-methyltransferase TrmFO (466 aa).

16 to 21 is an FAD binding site; that stretch reads GGGMAG.

This sequence belongs to the MnmG family. TrmFO subfamily. It depends on FAD as a cofactor.

It localises to the cytoplasm. It catalyses the reaction uridine(54) in tRNA + (6R)-5,10-methylene-5,6,7,8-tetrahydrofolate + NADH + H(+) = 5-methyluridine(54) in tRNA + (6S)-5,6,7,8-tetrahydrofolate + NAD(+). The catalysed reaction is uridine(54) in tRNA + (6R)-5,10-methylene-5,6,7,8-tetrahydrofolate + NADPH + H(+) = 5-methyluridine(54) in tRNA + (6S)-5,6,7,8-tetrahydrofolate + NADP(+). Its function is as follows. Catalyzes the folate-dependent formation of 5-methyl-uridine at position 54 (M-5-U54) in all tRNAs. This is Methylenetetrahydrofolate--tRNA-(uracil-5-)-methyltransferase TrmFO from Maricaulis maris (strain MCS10) (Caulobacter maris).